Reading from the N-terminus, the 237-residue chain is MRPSDRTPAQSRPVTITRQFTAHAEGSVLVEFGDTKVLCTASFEEGVPRFLKGKGQGWVTAEYGMLPRSTHSRMNREAARGKQSGRTQEIQRLIGRSLRAAVDMKALGENTIVIDCDVIQADGGTRTAAITGACVALVDSLNWARGKGILKTNPLKFLIAAVSVGIYKGEPICDLEYIEDSEAETDMNVVMTETGKMIEIQGTAEGEPFSHEELLSLLELAKHGIREIVDIQKAALS.

Phosphate-binding positions include Arg86 and Gly124–Arg126.

It belongs to the RNase PH family. Homohexameric ring arranged as a trimer of dimers.

The catalysed reaction is tRNA(n+1) + phosphate = tRNA(n) + a ribonucleoside 5'-diphosphate. Its function is as follows. Phosphorolytic 3'-5' exoribonuclease that plays an important role in tRNA 3'-end maturation. Removes nucleotide residues following the 3'-CCA terminus of tRNAs; can also add nucleotides to the ends of RNA molecules by using nucleoside diphosphates as substrates, but this may not be physiologically important. Probably plays a role in initiation of 16S rRNA degradation (leading to ribosome degradation) during starvation. This Shewanella sediminis (strain HAW-EB3) protein is Ribonuclease PH.